Here is a 140-residue protein sequence, read N- to C-terminus: Gonadotropin subunit beta-2 (140 aa).

The first 23 residues, 1-23, serve as a signal peptide directing secretion; it reads MSVPASSFLLLCFLMNSFSPAQS. 6 disulfides stabilise this stretch: cysteine 29–cysteine 77, cysteine 43–cysteine 92, cysteine 46–cysteine 130, cysteine 54–cysteine 108, cysteine 58–cysteine 110, and cysteine 113–cysteine 120. Residue asparagine 33 is glycosylated (N-linked (GlcNAc...) asparagine).

Belongs to the glycoprotein hormones subunit beta family. As to quaternary structure, heterodimer of an alpha and a beta chain.

The protein localises to the secreted. Its function is as follows. Involved in gametogenesis and steroidogenesis. The protein is Gonadotropin subunit beta-2 (cgbb) of Ictalurus punctatus (Channel catfish).